Here is a 175-residue protein sequence, read N- to C-terminus: ATP-dependent protease subunit HslV (175 aa).

Thr2 is a catalytic residue. Na(+) contacts are provided by Ala156, Cys159, and Thr162.

Belongs to the peptidase T1B family. HslV subfamily. In terms of assembly, a double ring-shaped homohexamer of HslV is capped on each side by a ring-shaped HslU homohexamer. The assembly of the HslU/HslV complex is dependent on binding of ATP.

The protein resides in the cytoplasm. It carries out the reaction ATP-dependent cleavage of peptide bonds with broad specificity.. With respect to regulation, allosterically activated by HslU binding. Functionally, protease subunit of a proteasome-like degradation complex believed to be a general protein degrading machinery. The sequence is that of ATP-dependent protease subunit HslV from Rhizobium johnstonii (strain DSM 114642 / LMG 32736 / 3841) (Rhizobium leguminosarum bv. viciae).